Reading from the N-terminus, the 225-residue chain is Protein-L-isoaspartate O-methyltransferase (225 aa).

The active site involves serine 75.

Belongs to the methyltransferase superfamily. L-isoaspartyl/D-aspartyl protein methyltransferase family.

The protein localises to the cytoplasm. It catalyses the reaction [protein]-L-isoaspartate + S-adenosyl-L-methionine = [protein]-L-isoaspartate alpha-methyl ester + S-adenosyl-L-homocysteine. Catalyzes the methyl esterification of L-isoaspartyl residues in peptides and proteins that result from spontaneous decomposition of normal L-aspartyl and L-asparaginyl residues. It plays a role in the repair and/or degradation of damaged proteins. In Xanthomonas axonopodis pv. citri (strain 306), this protein is Protein-L-isoaspartate O-methyltransferase.